The primary structure comprises 247 residues: MINNYIDITVRLLENILDNEADYVKEAGAKVAESIENDGVIHLFGCGHSHILTEEVFYRAGGLAAIHPILHEPLMLHEGAAASSVLERKNDYAKTFMAEEDIRPGDIMIVLSTSGRNPVPIDVAEIAREKGAFVIVITSLQYSASQKSRHTSGKRLSDTGDIVIDNGAVKGDAVLKSANFDIAFAPTSTVTGAVILQSIFAEAIETMVNDNFTPPVFISGNVENADAHNQALVDKYNERIPLLGMNL.

The SIS domain maps to 31–214 (VAESIENDGV…ETMVNDNFTP (184 aa)).

This sequence belongs to the UPF0309 family.

The sequence is that of UPF0309 protein LMOf2365_2617 from Listeria monocytogenes serotype 4b (strain F2365).